The primary structure comprises 228 residues: uncharacterized protein (228 aa).

Positions 1–28 (MRKKRVITCVMAASLTLGSLLPAGYASA) are cleaved as a signal peptide.

This is an uncharacterized protein from Bacillus subtilis (strain 168).